The chain runs to 318 residues: Protein RecA (318 aa).

Position 53–60 (53–60 (GPESSGKT)) interacts with ATP.

The protein belongs to the RecA family.

It is found in the cytoplasm. Can catalyze the hydrolysis of ATP in the presence of single-stranded DNA, the ATP-dependent uptake of single-stranded DNA by duplex DNA, and the ATP-dependent hybridization of homologous single-stranded DNAs. It interacts with LexA causing its activation and leading to its autocatalytic cleavage. This chain is Protein RecA, found in Bacteroides fragilis (strain YCH46).